The primary structure comprises 791 residues: Nuclear cap-binding protein subunit 1 (791 aa).

Over residues 1–14 (MSRRRHSDENDGGP) the composition is skewed to basic and acidic residues. Residues 1 to 24 (MSRRRHSDENDGGPHHKRRKTSEP) are disordered. Residues 28–240 (EDRLESLICR…CLWAQIQKLK (213 aa)) form the MIF4G domain. Residues 641 to 714 (LHSTIRKMNK…SEQKNLFLVI (74 aa)) adopt a coiled-coil conformation. Residues 668–687 (KQHKHRDSDDNDEDSGRKDG) form a disordered region.

This sequence belongs to the NCBP1 family. As to quaternary structure, component of the nuclear cap-binding complex (CBC), a heterodimer composed of ncbp1/cbp80 and ncbp2/cbp20 that interacts with m7GpppG-capped RNA. Component of an alternative nuclear cap-binding complex (CBC) composed of ncbp1/cbp80 and ncbp3.

It localises to the nucleus. The protein localises to the cytoplasm. Component of the cap-binding complex (CBC), which binds cotranscriptionally to the 5'-cap of pre-mRNAs and is involved in various processes such as pre-mRNA splicing, translation regulation, nonsense-mediated mRNA decay, RNA-mediated gene silencing (RNAi) by microRNAs (miRNAs) and mRNA export. The CBC complex is involved in mRNA export from the nucleus, leading to the recruitment of the mRNA export machinery to the 5'-end of mRNA and to mRNA export in a 5' to 3' direction through the nuclear pore. The CBC complex is also involved in mediating U snRNA and intronless mRNAs export from the nucleus. The CBC complex is essential for a pioneer round of mRNA translation, before steady state translation when the CBC complex is replaced by cytoplasmic cap-binding protein eIF4E. The pioneer round of mRNA translation mediated by the CBC complex plays a central role in nonsense-mediated mRNA decay (NMD), NMD only taking place in mRNAs bound to the CBC complex, but not on eIF4E-bound mRNAs. The CBC complex enhances NMD in mRNAs containing at least one exon-junction complex (EJC), promoting the interaction between UPF1 and UPF2. The CBC complex is also involved in 'failsafe' NMD, which is independent of the EJC complex, while it does not participate in Staufen-mediated mRNA decay (SMD). During cell proliferation, the CBC complex is also involved in microRNAs (miRNAs) biogenesis via its interaction with SRRT/ARS2 and is required for miRNA-mediated RNA interference. The CBC complex also acts as a negative regulator of parn, thereby acting as an inhibitor of mRNA deadenylation. In the CBC complex, ncbp1/cbp80 does not bind directly capped RNAs (m7GpppG-capped RNA) but is required to stabilize the movement of the N-terminal loop of ncbp2/cbp20 and lock the CBC into a high affinity cap-binding state with the cap structure. Associates with NCBP3 to form an alternative cap-binding complex (CBC) which plays a key role in mRNA export. The conventional CBC with NCBP2 binds both small nuclear RNA (snRNA) and messenger (mRNA) and is involved in their export from the nucleus whereas the alternative CBC with NCBP3 does not bind snRNA and associates only with mRNA thereby playing a role only in mRNA export. The polypeptide is Nuclear cap-binding protein subunit 1 (ncbp1) (Xenopus tropicalis (Western clawed frog)).